We begin with the raw amino-acid sequence, 314 residues long: Zinc transporter ZIP3 (314 aa).

At 1–3 (MVK) the chain is on the extracellular side. Residues 4–24 (LLVAKILCMVGMFFFMLLGSL) form a helical membrane-spanning segment. The Cytoplasmic portion of the chain corresponds to 25 to 42 (LPVKIIEMDFEKAHRSKK). Residues 43 to 63 (ILSLCNTFGGGVFLATCFNAL) form a helical membrane-spanning segment. Residues 64–85 (LPAVREKLKEVLTLAHISTDYP) lie on the Extracellular side of the membrane. The helical transmembrane segment at 86 to 106 (LAETIMLLGFFMTVFLEQLVL) threads the bilayer. Topologically, residues 107 to 169 (TFRKERPAFI…QELSRSSPLR (63 aa)) are cytoplasmic. Phosphoserine occurs at positions 125 and 129. A helical transmembrane segment spans residues 170 to 190 (LLSLVFALSAHSVFEGLALGL). Over 191–196 (QEEGEK) the chain is Extracellular. Residues 197–217 (VVSLFVGVAIHETLVAVALGI) form a helical membrane-spanning segment. At 218-229 (NMARSAMALRDA) the chain is on the cytoplasmic side. Residues 230–250 (AKLAVTVSAMIPLGISLGLGI) traverse the membrane as a helical segment. Residues 251–262 (DSAQGMPSSVAS) lie on the Extracellular side of the membrane. Residues 263–283 (VLLQGLAGGTFLFVTFFEILA) traverse the membrane as a helical segment. The Cytoplasmic portion of the chain corresponds to 284–292 (KELEEKSDR). Residues 293 to 313 (LLKVLFLVLGYTVLAGMVFIK) traverse the membrane as a helical segment. Position 314 (tryptophan 314) is a topological domain, extracellular.

Belongs to the ZIP transporter (TC 2.A.5) family.

The protein localises to the cell membrane. It is found in the apical cell membrane. It catalyses the reaction Zn(2+)(in) = Zn(2+)(out). Functionally, transporter for the divalent cation Zn(2+). Mediates the influx of Zn(2+) into cells from extracellular space. Controls Zn(2+) accumulation into dentate gyrus granule cells in the hippocampus. Mediates Zn(2+) reuptake from the secreted milk within the alveolar lumen. This chain is Zinc transporter ZIP3 (SLC39A3), found in Bos taurus (Bovine).